Reading from the N-terminus, the 360-residue chain is Malate dehydrogenase (360 aa).

This sequence belongs to the LDH2/MDH2 oxidoreductase family. In terms of assembly, homodimer.

Its subcellular location is the cytoplasm. It catalyses the reaction (S)-malate + NAD(+) = oxaloacetate + NADH + H(+). The polypeptide is Malate dehydrogenase (mdh) (Pyrococcus horikoshii (strain ATCC 700860 / DSM 12428 / JCM 9974 / NBRC 100139 / OT-3)).